The chain runs to 481 residues: MQLYSSVCTHYPAGAPGPTAAAPAPPAAATPFKVSLQPPGAAGAAPEPETGECQPAAAAEHREAAAVPAAKMPAFSSCFEVVSGAAAPASAAAGPPGASCKPPLPPHYTSTAQITVRALGADRLLLHGPDPVPGAAGSAAAPRGRCLLLAPAPAAPVPPRRGSSAWLLEELLRPDCPEPAGLDATREGPDRNFRLSEHRQALAAAKHRGPAATPGSPDPGPGPWGEEHLAERGPRGWERGGDRCDAPGGDAARRPDPEAEAPPAGSIEAAPSSAAEPVIVSRSDPRDEKLALYLAEVEKQDKYLRQRNKYRFHIIPDGNCLYRAVSKTVYGDQSLHRELREQTVHYIADHLDHFSPLIEGDVGEFIIAAAQDGAWAGYPELLAMGQMLNVNIHLTTGGRLESPTVSTMIHYLGPEDSLRPSIWLSWLSNGHYDAVFDHSYPNPEYDNWCKQTQVQRKRDEELAKSMAISLSKMYIEQNACS.

Disordered stretches follow at residues 18–60 and 202–282; these read PTAA…AAAE and LAAA…IVSR. Over residues 38-58 the composition is skewed to low complexity; the sequence is PPGAAGAAPEPETGECQPAAA. Residues 225-257 are compositionally biased toward basic and acidic residues; the sequence is GEEHLAERGPRGWERGGDRCDAPGGDAARRPDP. Low complexity predominate over residues 261 to 281; that stretch reads APPAGSIEAAPSSAAEPVIVS. Positions 309–438 constitute an OTU domain; sequence KYRFHIIPDG…NGHYDAVFDH (130 aa). Residues 314–320 form a cys-loop region; it reads IIPDGNC. The active site involves Asp317. Residue Cys320 is the Nucleophile of the active site. The tract at residues 369 to 379 is his-loop; sequence AAQDGAWAGYP. The variable-loop stretch occupies residues 426 to 431; that stretch reads WLSNGH. The active site involves His431. Residues 457–476 form the UIM domain; the sequence is KRDEELAKSMAISLSKMYIE.

It catalyses the reaction Thiol-dependent hydrolysis of ester, thioester, amide, peptide and isopeptide bonds formed by the C-terminal Gly of ubiquitin (a 76-residue protein attached to proteins as an intracellular targeting signal).. Its function is as follows. Deubiquitinating enzyme that specifically hydrolyzes 'Lys-63'-linked polyubiquitin to monoubiquitin. Required for the stability and translation of a subset mRNAs with a high abundance of rare codons by mediating deubiquitination of 40S ribosomal protein RPS10/eS10, thereby antagonizing ZNF598-mediated 40S ubiquitination. The abundance of rare codons in mRNAs can limit the translation rate and can lead to ribosome collisions that trigger activation of ribosome quality control (RQC) pathway by ZNF598. OTUD1-mediated deubiquitination prevents activation of the RQC and subsequent dissociation of ribosomes and stimulates formation of polysomes and translation. The protein is OTU domain-containing protein 1 of Homo sapiens (Human).